The sequence spans 160 residues: CXXC motif containing zinc binding protein (160 aa).

Zn(2+) is bound by residues Cys33, Cys36, Cys67, and Cys70. Phosphoserine is present on Ser75.

This sequence belongs to the UPF0587 family. In terms of assembly, monomer.

This is CXXC motif containing zinc binding protein (Czib) from Mus musculus (Mouse).